The primary structure comprises 208 residues: Uracil phosphoribosyltransferase (208 aa).

5-phospho-alpha-D-ribose 1-diphosphate-binding positions include arginine 78, arginine 103, and 130-138; that span reads DPMLATGGS. Residues isoleucine 193 and 198–200 contribute to the uracil site; that span reads GDA. A 5-phospho-alpha-D-ribose 1-diphosphate-binding site is contributed by aspartate 199.

This sequence belongs to the UPRTase family. The cofactor is Mg(2+).

It catalyses the reaction UMP + diphosphate = 5-phospho-alpha-D-ribose 1-diphosphate + uracil. Its pathway is pyrimidine metabolism; UMP biosynthesis via salvage pathway; UMP from uracil: step 1/1. Its activity is regulated as follows. Allosterically activated by GTP. Functionally, catalyzes the conversion of uracil and 5-phospho-alpha-D-ribose 1-diphosphate (PRPP) to UMP and diphosphate. This is Uracil phosphoribosyltransferase from Shewanella baltica (strain OS223).